A 231-amino-acid chain; its full sequence is Antiholin-like protein LrgB (231 aa).

5 consecutive transmembrane segments (helical) span residues 7-24 (PYFG…GTFL), 34-56 (FTPL…FSYA), 91-113 (WWQI…YLLA), 149-171 (ITAF…FLKV), and 207-229 (ASIA…VQLI).

It belongs to the CidB/LrgB family. LrgB subfamily.

Its subcellular location is the cell membrane. Inhibits the expression or activity of extracellular murein hydrolases by interacting, possibly with LrgA, with the holin-like protein CidA. The LrgAB and CidA proteins may affect the proton motive force of the membrane. May be involved in programmed cell death (PCD), possibly triggering PCD in response to antibiotics and environmental stresses. In Bacillus subtilis (strain 168), this protein is Antiholin-like protein LrgB.